A 164-amino-acid polypeptide reads, in one-letter code: 2-C-methyl-D-erythritol 2,4-cyclodiphosphate synthase (164 aa).

Residues Asp-9 and His-11 each coordinate a divalent metal cation. Residues 9–11 and 35–36 contribute to the 4-CDP-2-C-methyl-D-erythritol 2-phosphate site; these read DVH and HS. Position 43 (His-43) interacts with a divalent metal cation. 4-CDP-2-C-methyl-D-erythritol 2-phosphate contacts are provided by residues 57 to 59, 62 to 66, 133 to 136, Phe-140, and Arg-143; these read DIG, FPDTD, and TTTE.

This sequence belongs to the IspF family. Homotrimer. The cofactor is a divalent metal cation.

The catalysed reaction is 4-CDP-2-C-methyl-D-erythritol 2-phosphate = 2-C-methyl-D-erythritol 2,4-cyclic diphosphate + CMP. Its pathway is isoprenoid biosynthesis; isopentenyl diphosphate biosynthesis via DXP pathway; isopentenyl diphosphate from 1-deoxy-D-xylulose 5-phosphate: step 4/6. Its function is as follows. Involved in the biosynthesis of isopentenyl diphosphate (IPP) and dimethylallyl diphosphate (DMAPP), two major building blocks of isoprenoid compounds. Catalyzes the conversion of 4-diphosphocytidyl-2-C-methyl-D-erythritol 2-phosphate (CDP-ME2P) to 2-C-methyl-D-erythritol 2,4-cyclodiphosphate (ME-CPP) with a corresponding release of cytidine 5-monophosphate (CMP). This is 2-C-methyl-D-erythritol 2,4-cyclodiphosphate synthase from Syntrophotalea carbinolica (strain DSM 2380 / NBRC 103641 / GraBd1) (Pelobacter carbinolicus).